Consider the following 308-residue polypeptide: S-crystallin SL18 (308 aa).

Positions 2–80 (PKYTLYYFNS…YLARQFGFYG (79 aa)) constitute a GST N-terminal domain. Positions 165–205 (EMRSQDSMVEPPSQKLSPELESQSSLCSERPQCGPPDPMMG) are disordered. Residues 178–191 (QKLSPELESQSSLC) show a composition bias toward polar residues. Residues 185–308 (ESQSSLCSER…YFTLRNYTDF (124 aa)) form the GST C-terminal domain.

Belongs to the GST superfamily. In terms of tissue distribution, lens.

S-crystallins are structural components of squids and octopi eye lens. Contains relatively little if any GST activity. In Nototodarus sloanii (Wellington flying squid), this protein is S-crystallin SL18.